The sequence spans 482 residues: Bifunctional protein GlmU (482 aa).

Residues 1-238 (MSAIRPAAVV…HREIAGINNR (238 aa)) are pyrophosphorylase. Residues 12-15 (LAAG), Lys26, Gln79, and 84-85 (GT) each bind UDP-N-acetyl-alpha-D-glucosamine. A Mg(2+)-binding site is contributed by Asp110. Gly147, Glu163, Asn178, and Asn236 together coordinate UDP-N-acetyl-alpha-D-glucosamine. Asn236 contributes to the Mg(2+) binding site. Residues 239–259 (VQLAEARRILNDRLLTRAMLA) form a linker region. Positions 260–482 (GVTVVDPATT…VASRKPEGED (223 aa)) are N-acetyltransferase. Arg341 and Lys359 together coordinate UDP-N-acetyl-alpha-D-glucosamine. His371 acts as the Proton acceptor in catalysis. UDP-N-acetyl-alpha-D-glucosamine contacts are provided by Tyr374 and Asn385. Acetyl-CoA is bound by residues Ala388, 394–395 (NY), Ser413, Ala431, and Arg448.

This sequence in the N-terminal section; belongs to the N-acetylglucosamine-1-phosphate uridyltransferase family. It in the C-terminal section; belongs to the transferase hexapeptide repeat family. As to quaternary structure, homotrimer. It depends on Mg(2+) as a cofactor.

The protein localises to the cytoplasm. The enzyme catalyses alpha-D-glucosamine 1-phosphate + acetyl-CoA = N-acetyl-alpha-D-glucosamine 1-phosphate + CoA + H(+). It carries out the reaction N-acetyl-alpha-D-glucosamine 1-phosphate + UTP + H(+) = UDP-N-acetyl-alpha-D-glucosamine + diphosphate. It participates in nucleotide-sugar biosynthesis; UDP-N-acetyl-alpha-D-glucosamine biosynthesis; N-acetyl-alpha-D-glucosamine 1-phosphate from alpha-D-glucosamine 6-phosphate (route II): step 2/2. The protein operates within nucleotide-sugar biosynthesis; UDP-N-acetyl-alpha-D-glucosamine biosynthesis; UDP-N-acetyl-alpha-D-glucosamine from N-acetyl-alpha-D-glucosamine 1-phosphate: step 1/1. Its pathway is bacterial outer membrane biogenesis; LPS lipid A biosynthesis. Its function is as follows. Catalyzes the last two sequential reactions in the de novo biosynthetic pathway for UDP-N-acetylglucosamine (UDP-GlcNAc). The C-terminal domain catalyzes the transfer of acetyl group from acetyl coenzyme A to glucosamine-1-phosphate (GlcN-1-P) to produce N-acetylglucosamine-1-phosphate (GlcNAc-1-P), which is converted into UDP-GlcNAc by the transfer of uridine 5-monophosphate (from uridine 5-triphosphate), a reaction catalyzed by the N-terminal domain. This chain is Bifunctional protein GlmU, found in Streptomyces avermitilis (strain ATCC 31267 / DSM 46492 / JCM 5070 / NBRC 14893 / NCIMB 12804 / NRRL 8165 / MA-4680).